Consider the following 702-residue polypeptide: Amino-acid racemase (702 aa).

At 1–12 the chain is on the cytoplasmic side; the sequence is MKHRANGIDLFR. Residues 13–33 form a helical membrane-spanning segment; sequence IFAATMVVAIHTFPFQSIAPF. Over 34–39 the chain is Extracellular; sequence LDEVIT. The chain crosses the membrane as a helical span at residues 40-60; it reads LTVFRVAVPFFFMITGYFLLG. The Cytoplasmic segment spans residues 61-77; the sequence is RLSLNFSYNNNQRVKKY. A helical transmembrane segment spans residues 78–98; sequence LYKIGMIYLYSILLYFPLSLL. Over 99 to 120 the chain is Extracellular; that stretch reads NGTISLKMNILLLLKVFIFDGT. A helical membrane pass occupies residues 121 to 141; that stretch reads FYHLWYFPASIIGTILVTLLL. Position 142 (R142) is a topological domain, cytoplasmic. The chain crosses the membrane as a helical span at residues 143 to 163; that stretch reads SIGFKLTVAFSTCLYLVGLGG. Residues 164-191 lie on the Extracellular side of the membrane; it reads DSWYGITNQVPLLNKLYTFIFSWSDYTR. A helical transmembrane segment spans residues 192 to 212; it reads SGVFFTPVFLCLGIFAYRVSK. Residues 213 to 218 lie on the Cytoplasmic side of the membrane; sequence KLTASK. Residues 219–239 traverse the membrane as a helical segment; it reads ILNLLFYVFIIGMTFESIFLH. At 240–248 the chain is on the extracellular side; that stretch reads RFTNVKHDS. The chain crosses the membrane as a helical span at residues 249–269; it reads MYLLLPSCALILFLMLLNWQP. The Cytoplasmic segment spans residues 270–276; it reads KLKVKES. A helical transmembrane segment spans residues 277 to 297; that stretch reads ADLTLLVYILHPLVIVIVHSI. At 298 to 307 the chain is on the extracellular side; the sequence is SKYIPILKNS. Residues 308-328 traverse the membrane as a helical segment; sequence LLNFLLVVVCSFILAQLLLNL. Over 329 to 702 the chain is Cytoplasmic; it reads KRKLRVSKQK…LGSRLGTELN (374 aa). The racemase stretch occupies residues 337 to 702; sequence QKIPFERASK…LGSRLGTELN (366 aa). K375 functions as the Proton acceptor in the catalytic mechanism. K375 bears the N6-(pyridoxal phosphate)lysine mark. R469 is a substrate binding site. Catalysis depends on Y601, which acts as the Proton acceptor. M650 contacts substrate.

In the N-terminal section; belongs to the acyltransferase 3 family. This sequence in the C-terminal section; belongs to the alanine racemase family. Pyridoxal 5'-phosphate is required as a cofactor.

The protein resides in the cell membrane. In Enterococcus faecalis (Streptococcus faecalis), this protein is Amino-acid racemase (vanTE).